The primary structure comprises 534 residues: Glutamyl-tRNA(Gln) amidotransferase subunit B, mitochondrial (534 aa).

Residues 1 to 28 (MTVLCRLRHCHLSTPTLCRRFHDARVYK) constitute a mitochondrion transit peptide.

The protein belongs to the GatB/GatE family. GatB subfamily. As to quaternary structure, subunit of the heterotrimeric GatCAB amidotransferase (AdT) complex, composed of A, B and C subunits.

Its subcellular location is the mitochondrion. It catalyses the reaction L-glutamyl-tRNA(Gln) + L-glutamine + ATP + H2O = L-glutaminyl-tRNA(Gln) + L-glutamate + ADP + phosphate + H(+). In terms of biological role, allows the formation of correctly charged Gln-tRNA(Gln) through the transamidation of misacylated Glu-tRNA(Gln) in the mitochondria. The reaction takes place in the presence of glutamine and ATP through an activated gamma-phospho-Glu-tRNA(Gln). In Laccaria bicolor (strain S238N-H82 / ATCC MYA-4686) (Bicoloured deceiver), this protein is Glutamyl-tRNA(Gln) amidotransferase subunit B, mitochondrial.